A 270-amino-acid polypeptide reads, in one-letter code: uncharacterized protein (270 aa).

Disordered regions lie at residues 35–67 and 168–204; these read IKQD…GGNK and SNNN…DNSN. Residues 39–48 show a composition bias toward low complexity; sequence NNNNNNNNTN. The span at 49 to 67 shows a compositional bias: polar residues; it reads VSLSPSIKSQATSSTGGNK. A compositionally biased stretch (low complexity) spans 168-191; sequence SNNNNNNNNNNNNNNNNNNNNNNN.

This is an uncharacterized protein from Dictyostelium discoideum (Social amoeba).